The sequence spans 598 residues: MFDKYRKTLVAGTVAITLGLSASGVMAAGFKPAPPAGQLGAVIVDPYGNAPLTALVDLDSHVISDVKVTVHGKGEKGVEISYPVGQESLKTYDGVPIFGLYQKFANKVTVEWKENGKVMKDDYVVHTSAIVNNYMDNRSISDLQQTKVIKVAPGFEDRLYLVNTHTFTAQGXDLHWHGEKDKNAGILDAGPATGALPFDIAPFTFIVDTEGEYRWWLDQDTFYDGRDRDINKRGYLMGIRETPRGTFTAVQGQHWYEFDMMGQVLEDHKLPRGFADATHESIETPNGTVLLRVGKSNYRRDDGVHVTTIRDHILEVDKSGRVVDVWDLTKILDPKRDALLGALDAGAVCVNVDLAHAGQQAKLEPDTPFGDALGVGPGRNWAHVNSIAYDAKDDSIILSSRHQGVVKIGRDKQVKWILAPSKGWEKPLASKLLKPVDANGKPITCNENGLCENSDFDFTYTQHTAWISSKGTLTIFDNGDGRHLEQPALPTMKYSRFVEYKIDEKKGTVQQVWEYGKERGYDFYSPITSIIEYQADRNTMFGFGGSIHLFDVGQPTVGKLNEIDYKTKEVKVEIDVLSDKPNQTHYRALLVRPQQMFK.

An N-terminal signal peptide occupies residues 1–27; that stretch reads MFDKYRKTLVAGTVAITLGLSASGVMA. Histidine 279 and histidine 383 together coordinate 4-methylumbelliferone. Cysteine 445 and cysteine 451 are joined by a disulfide. Residue histidine 463 participates in 4-methylumbelliferone binding. The active-site Nucleophile; sulfurylated histidine covalent intermediate is histidine 463.

Belongs to the aryl sulfotransferase family. Homodimer. The disulfide bond is crucial for enzyme activity.

Its subcellular location is the periplasm. The enzyme catalyses an aryl sulfate + a phenol = an aryl sulfate + a phenol. The catalysed reaction is 4-methylumbelliferone sulfate + phenol = phenyl sulfate + 4-methylumbelliferone. Catalyzes the transfer of a sulfate group from a phenyl sulfate ester to other phenolic compounds. In vitro, is able to use 4-methylumbelliferyl sulfate and p-nitrophenyl sulfate (PNS) as donor substrates with phenol as the acceptor substrate. Cannot use 3'-phosphoadenosine-5'-phophosulfate (PAPS), the donor substrate of mammalian sulfotransferase. This chain is Arylsulfate sulfotransferase AssT, found in Escherichia coli O6:H1 (strain CFT073 / ATCC 700928 / UPEC).